The primary structure comprises 390 residues: Protein TAB2 homolog, chloroplastic (390 aa).

The N-terminal 69 residues, 1–69 (MTTATAIVAG…RSISSESSTE (69 aa)), are a transit peptide targeting the chloroplast. Residues 16-85 (RRSLPLPNPP…IADEEVEAEN (70 aa)) are disordered. Over residues 61–75 (SISSESSTEASAAAD) the composition is skewed to low complexity.

Its subcellular location is the plastid. It localises to the chloroplast. Nuclear genome-encoded factor involved in the biogenesis of photosystem I (PSI). Required for the accumulation of PSI during plant development. Does not seem to be required for the translation of mRNAs of the PSI subunits. This is Protein TAB2 homolog, chloroplastic from Zea mays (Maize).